A 482-amino-acid polypeptide reads, in one-letter code: Transcription initiation factor IIE subunit alpha (482 aa).

Residues 9-99 (VKNLLKFVVR…KYPHAIDAIK (91 aa)) enclose the HTH TFE/IIEalpha-type domain. Residues 124–152 (CPICLTKYTQLEAVQLLNFDRTEFLCSLC) form a C4-type zinc finger. Positions 274 to 286 (RELQERQAEEKRK) are enriched in basic and acidic residues. Disordered regions lie at residues 274–295 (RELQERQAEEKRKQNAVPEWHK) and 321–482 (AMDS…FEDV). Residues 321-345 (AMDSINPDNEPAQETSYQNNRTLTE) show a composition bias toward polar residues. Acidic residues predominate over residues 374–401 (EEEEEEEEEEDEEEEEEEEMEDVMDDND). Residues 419-432 (TAGTAKTESNTSND) show a composition bias toward polar residues. Residues 433–444 (VKQESINDKTED) show a composition bias toward basic and acidic residues. The segment covering 464-482 (GDDDDDDDDDEMDIEFEDV) has biased composition (acidic residues).

It belongs to the TFIIE alpha subunit family. As to quaternary structure, TFIIE is a tetramer of two alpha (TFA1) and two beta (TFA2) subunits.

It is found in the nucleus. Recruits TFIIH to the initiation complex and stimulates the RNA polymerase II C-terminal domain kinase and DNA-dependent ATPase activities of TFIIH. Both TFIIH and TFIIE are required for promoter clearance by RNA polymerase. The sequence is that of Transcription initiation factor IIE subunit alpha (TFA1) from Saccharomyces cerevisiae (strain ATCC 204508 / S288c) (Baker's yeast).